A 1021-amino-acid chain; its full sequence is Probable LRR receptor-like serine/threonine-protein kinase RFK1 (1021 aa).

The first 39 residues, 1–39 (MISLYQILAEKKKKKKNDLNIFAFSVFAIICFKFYSVNA), serve as a signal peptide directing secretion. The Extracellular segment spans residues 41 to 625 (KLPQQEVDAL…PKTGMSPGAY (585 aa)). A glycan (N-linked (GlcNAc...) asparagine) is linked at Asn96. LRR repeat units follow at residues 99 to 122 (DCHVVKFAFKDHNLPGTLPQIVKL) and 123 to 146 (PYLREIDLAYNYINGTLPREWASS). N-linked (GlcNAc...) asparagine glycans are attached at residues Asn136, Asn147, and Asn168. LRR repeat units lie at residues 148 to 168 (LTFISLLVNRLSGEIPKEFGN), 169 to 192 (SSLTYLDLESNAFSGTIPQELGNL), 193 to 216 (VHLKKLLLSSNKLTGTLPASLARL), 218 to 240 (NMTDFRINDLQLSGTIPSYIQNW), and 241 to 266 (KQLERLEMIASGLTGPIPSVISVLSN). An N-linked (GlcNAc...) asparagine glycan is attached at Asn218. N-linked (GlcNAc...) asparagine glycans are attached at residues Asn287 and Asn300. LRR repeat units follow at residues 288-312 (VTGLTKIILKNCNISGQIPTYLSHL), 313-336 (KELETLDLSFNKLVGGIPSFAQAE), 338-359 (LRFIILAGNMLEGDAPDELLRD), and 361-381 (ITVDLSYNNLKWQSPESRACR). N-linked (GlcNAc...) asparagine glycans are attached at residues Asn486 and Asn512. The helical transmembrane segment at 626 to 646 (IAIGIGAPCLIIFILGFLWIC) threads the bilayer. Residues 647–1021 (GCLPRCGRQR…QERKKEESRP (375 aa)) are Cytoplasmic-facing. Thr670 bears the Phosphothreonine mark. The Protein kinase domain occupies 681 to 956 (FNPTNKIGEG…EVVAMLEGLY (276 aa)). Residues 687–695 (IGEGGFGAV) and Lys709 contribute to the ATP site. A Phosphotyrosine modification is found at Tyr754. Asp807 acts as the Proton acceptor in catalysis. Ser840 is modified (phosphoserine). Residues Thr841 and Thr846 each carry the phosphothreonine modification. The residue at position 854 (Tyr854) is a Phosphotyrosine. Positions 985-1021 (ENNSKTQCSVKSYPSSSSTSSGAGQAVQERKKEESRP) are disordered. Residues 993 to 1005 (SVKSYPSSSSTSS) are compositionally biased toward low complexity. The segment covering 1012-1021 (QERKKEESRP) has biased composition (basic and acidic residues).

Belongs to the protein kinase superfamily. Ser/Thr protein kinase family. As to expression, mostly expressed in flower buds, especially in stamens.

It is found in the membrane. It carries out the reaction L-seryl-[protein] + ATP = O-phospho-L-seryl-[protein] + ADP + H(+). The catalysed reaction is L-threonyl-[protein] + ATP = O-phospho-L-threonyl-[protein] + ADP + H(+). The chain is Probable LRR receptor-like serine/threonine-protein kinase RFK1 (RKF1) from Arabidopsis thaliana (Mouse-ear cress).